The chain runs to 468 residues: MVYKVFLSLCIGLALSASAALHAQKAVSGHAPIQVETPARSSGQKHVLQLVTPKLETVRIGIIGLGMRGPGAVERFSKIPGTQIVALCDVLPERVKKTQEILVKAGLPEAAAYSGSEDAWKKLCEREDIDLVYIVTDWKTHAEMGVYAMEHGKHAAIEVPAAMTLEEIWKLIDTSERTRKHCIQLENCVYDFFELTTLNMAHQGVFGEILHAEGAYIHNLEDFWPYYWNNWRLDYNRKHRGDVYATHGMGPACQLLDIHRGDRMKTIVAMDTKAVNGPAYIKNKTGEVVADFQNGDQTTSLIRTEKGKTLLIQHNVMTPRPYSRKYQAVGTDGFADKYPLEMYCLRPAQVDSDIAPDHEKLNAHGPVSEEVKKALMEKYKHPIHRELEETAKKVGGHGGMDYIMDYRLIYCLRNGLPLDMDVYDLAEWCCLAELSRISIENGSAPVAIPDFTRGNWDKVKGYRHAMAE.

A signal peptide spans 1-19 (MVYKVFLSLCIGLALSASA). Residues 67-68 (MR), Asp-89, 138-141 (WKTH), 158-159 (EV), and Asn-187 contribute to the NAD(+) site. Substrate contacts are provided by residues Tyr-216, Arg-232, 244-247 (YATH), and Tyr-322. Tyr-244 lines the NAD(+) pocket.

It belongs to the Gfo/Idh/MocA family. Glycosyl hydrolase 109 subfamily. The cofactor is NAD(+).

Functionally, glycosidase. This chain is Glycosyl hydrolase family 109 protein, found in Porphyromonas gingivalis (strain ATCC BAA-308 / W83).